The primary structure comprises 75 residues: Peptide Ctri9610 (75 aa).

Residues Met-1 to Gly-22 form the signal peptide. At Lys-41 the chain carries Lysine amide. Positions Gly-42 to Tyr-75 are excised as a propeptide.

This sequence belongs to the non-disulfide-bridged peptide (NDBP) superfamily. Short antimicrobial peptide (group 4) family. In terms of tissue distribution, expressed by the venom gland.

The protein localises to the secreted. This is Peptide Ctri9610 from Chaerilus tricostatus (Scorpion).